Consider the following 599-residue polypeptide: MRTHYCGQVTAADLDQTVTLCGWVHRRRDHGGVIFIDLRDREGLVQVVCDPDRAETFHTAESIRNEFVIELTGKVRRRPAGTENPNLVSGEIEVLCHTLEVLNASATPPFQLDDDNLSENVRLTHRVIDLRRPQMQKNLMLRYKVAMAFRRFLDAQGFIDVETPMLTKSTPEGARDYLVPSRVHPGQFFALPQSPQLFKQLLMVAGFDRYYQITKCFRDEDLRADRQPEFTQVDIETSFLDEAEITAIMEDMIRYVFREALAVELPNPFPRMTHAEAMRRYGSDKPDLRVTLELTDVTDAVQDVAFKVFSGPATSGGRVAALRVPGGASLTRGEIDEYTKFVGIYGARGLAYIKVNDVTKPNDEGLQSPIVKNLHEEALRTILERTGAESGDLIFFGADKTKVVNDALGALRTKLGHEKGYVSGAAWTPVWVVDFPMFEYDDESKRWVACHHPFTAPKDEHVELLESAPGECLAKAYDLALNGWEIGGGSVRIHRADMQSKVFRALNIGDEEAQLKFGFLLDALKYGAPPHGGLAFGLDRVVTLMTGAESIRDVIAFPKTQRAQCLLTDAPGEVDDKQLRELHIRLRQKIETQVEVAKA.

Glu172 is a binding site for L-aspartate. Residues 196–199 are aspartate; the sequence is QLFK. Residue Arg218 coordinates L-aspartate. ATP is bound by residues 218–220 and Gln227; that span reads RDE. His451 contributes to the L-aspartate binding site. Glu485 contributes to the ATP binding site. Arg492 lines the L-aspartate pocket. Residue 537-540 coordinates ATP; that stretch reads GLDR.

It belongs to the class-II aminoacyl-tRNA synthetase family. Type 1 subfamily. Homodimer.

Its subcellular location is the cytoplasm. It catalyses the reaction tRNA(Asx) + L-aspartate + ATP = L-aspartyl-tRNA(Asx) + AMP + diphosphate. Aspartyl-tRNA synthetase with relaxed tRNA specificity since it is able to aspartylate not only its cognate tRNA(Asp) but also tRNA(Asn). Reaction proceeds in two steps: L-aspartate is first activated by ATP to form Asp-AMP and then transferred to the acceptor end of tRNA(Asp/Asn). This Aromatoleum aromaticum (strain DSM 19018 / LMG 30748 / EbN1) (Azoarcus sp. (strain EbN1)) protein is Aspartate--tRNA(Asp/Asn) ligase.